The sequence spans 388 residues: Chorismate synthase (388 aa).

NADP(+)-binding residues include arginine 39 and arginine 45. A disordered region spans residues 95-118; the sequence is EKNEKSRRVSRPRPGHADLVGGMK. FMN-binding positions include 130–132, 251–252, glycine 296, 311–315, and arginine 337; these read RSS, NA, and KPIPT.

It belongs to the chorismate synthase family. As to quaternary structure, homotetramer. Requires FMNH2 as cofactor.

The enzyme catalyses 5-O-(1-carboxyvinyl)-3-phosphoshikimate = chorismate + phosphate. The protein operates within metabolic intermediate biosynthesis; chorismate biosynthesis; chorismate from D-erythrose 4-phosphate and phosphoenolpyruvate: step 7/7. Functionally, catalyzes the anti-1,4-elimination of the C-3 phosphate and the C-6 proR hydrogen from 5-enolpyruvylshikimate-3-phosphate (EPSP) to yield chorismate, which is the branch point compound that serves as the starting substrate for the three terminal pathways of aromatic amino acid biosynthesis. This reaction introduces a second double bond into the aromatic ring system. This chain is Chorismate synthase, found in Listeria monocytogenes serotype 4b (strain F2365).